A 129-amino-acid chain; its full sequence is Ribonuclease VapC12 (129 aa).

The Mg(2+) site is built by Asp-5 and Asp-94.

This sequence belongs to the PINc/VapC protein family. Requires Mg(2+) as cofactor.

Functionally, toxic component of a type II toxin-antitoxin (TA) system. An RNase. The cognate antitoxin is VapB12. In Mycobacterium tuberculosis (strain CDC 1551 / Oshkosh), this protein is Ribonuclease VapC12.